A 370-amino-acid polypeptide reads, in one-letter code: Histidinol-phosphate aminotransferase 2 (370 aa).

Position 230 is an N6-(pyridoxal phosphate)lysine (K230).

Belongs to the class-II pyridoxal-phosphate-dependent aminotransferase family. Histidinol-phosphate aminotransferase subfamily. As to quaternary structure, homodimer. Pyridoxal 5'-phosphate is required as a cofactor.

The catalysed reaction is L-histidinol phosphate + 2-oxoglutarate = 3-(imidazol-4-yl)-2-oxopropyl phosphate + L-glutamate. It participates in amino-acid biosynthesis; L-histidine biosynthesis; L-histidine from 5-phospho-alpha-D-ribose 1-diphosphate: step 7/9. This chain is Histidinol-phosphate aminotransferase 2, found in Pseudomonas fluorescens (strain Pf0-1).